Reading from the N-terminus, the 198-residue chain is Recombination protein RecR (198 aa).

Residues 57–72 (CLNCGCLTDEAACYFC) form a C4-type zinc finger. The Toprim domain maps to 80 to 175 (QIICVTAFPR…QISRLAFGLP (96 aa)).

It belongs to the RecR family.

In terms of biological role, may play a role in DNA repair. It seems to be involved in an RecBC-independent recombinational process of DNA repair. It may act with RecF and RecO. This is Recombination protein RecR from Protochlamydia amoebophila (strain UWE25).